Consider the following 34-residue polypeptide: Tau-theraphotoxin-Pc1c (34 aa).

3 cysteine pairs are disulfide-bonded: Cys-2/Cys-16, Cys-9/Cys-21, and Cys-15/Cys-28. Residue Phe-34 is modified to Phenylalanine amide.

It belongs to the neurotoxin 10 (Hwtx-1) family. 62 (Vatx) subfamily. Expressed by the venom gland.

It is found in the secreted. Selectively activates mammalian TRPV1, or capsaicin receptor, a non-selective cation channel expressed by sensory neurons of the pain pathway. Is more potent than VaTx1 and VaTx2. Interacts with distinct regions of the channel than capsaicin, since it only acts on the extracellular face of the channel, and capsaicin binds to the cytosolic side. Also activates avian TRPV1, which is insensitive to capsaicin. In mice, elicits pain-related behaviors, such as licking and flinching of the affected limb. The paw of toxin-injected mice shows substantial edema. The polypeptide is Tau-theraphotoxin-Pc1c (Psalmopoeus cambridgei (Trinidad chevron tarantula)).